The primary structure comprises 156 residues: MMHICHIEIDTQGLPAPTPEIEQERKVAIFDLLEENTFTLPHEDAPSGPYRLSLAIREKRLVFDIDTEDGAEAAEFHLSLAPFRQTVKDYWQICEAYFDAVKKLPPSQIEAIDMARRGIHNEGARLLQERLEGKAEIDTDTARRLFTLICVLHFGA.

It belongs to the UPF0262 family.

This is UPF0262 protein Jann_2882 from Jannaschia sp. (strain CCS1).